We begin with the raw amino-acid sequence, 769 residues long: Scarecrow-like protein 14 (769 aa).

Disordered stretches follow at residues 1–23 (MGSYPDGFPGSMDELDFNKDFDL), 128–157 (PSSSSASSVDHPERLASDSPDGSCSGGAFS), 279–320 (TEKK…ERSN), and 364–388 (TAQSNGAKIRGKKSTSTSHSNDSKK). One can recognise a GRAS domain in the interval 384-765 (NDSKKETADL…RIVYASSLWV (382 aa)). The interval 391–451 (ADLRTLLVLC…EARLAGTGTQ (61 aa)) is leucine repeat I (LRI). Positions 470 to 536 (YQTYMSVCPF…GGSPKLRITG (67 aa)) are VHIID. The short motif at 501–505 (IHIID) is the VHIID element. Residues 552–584 (ETGHRLARYCQRHNVPFEYNAIAQKWETIQVED) are leucine repeat II (LRII). Residues 593 to 687 (VVVNSLFRFR…KEFYGREIVN (95 aa)) are PFYRE. Residues 690–765 (ACEGTERVER…RIVYASSLWV (76 aa)) form an SAW region.

It belongs to the GRAS family. Expressed in roots, shoots, flowers and siliques.

It is found in the nucleus. In terms of biological role, probable transcription factor involved in plant development. This chain is Scarecrow-like protein 14 (SCL14), found in Arabidopsis thaliana (Mouse-ear cress).